The primary structure comprises 160 residues: Cyanate hydratase (160 aa).

Residues arginine 100, glutamate 103, and serine 126 contribute to the active site.

Belongs to the cyanase family.

It carries out the reaction cyanate + hydrogencarbonate + 3 H(+) = NH4(+) + 2 CO2. Its function is as follows. Catalyzes the reaction of cyanate with bicarbonate to produce ammonia and carbon dioxide. This chain is Cyanate hydratase, found in Aspergillus oryzae (strain ATCC 42149 / RIB 40) (Yellow koji mold).